Reading from the N-terminus, the 251-residue chain is Capsid protein (251 aa).

The short motif at 3-20 is the Bipartite nuclear localization signal element; sequence KRDAPWRLMAGTSKVSRS. A Nuclear localization signal motif is present at residues 35–49; sequence KAAAWVNRPMYRKPR. A zinc finger lies at 63–80; the sequence is CEGPCKVQSYEQRHDISH. The Nuclear export signal signature appears at 96–117; the sequence is ITHRVGKRFCVKSVYILGKIWM. The short motif at 195–242 is the Bipartite nuclear localization signal element; that stretch reads RRFWKVNNHVVYNHQEAGKYENHTENALLLYMACTHASNPVYATLKIR.

This sequence belongs to the geminiviridae capsid protein family. In terms of assembly, homomultimer. Binds to single-stranded and double-stranded viral DNA. Interacts (via nuclear localization signals) with host importin alpha-1a.

Its subcellular location is the virion. The protein localises to the host nucleus. Its function is as follows. Encapsidates the viral DNA into characteristic twinned ('geminate') particles. Binds the genomic viral ssDNA and shuttles it into and out of the cell nucleus. The CP of bipartite geminiviruses is not required for cell-to-cell or systemic movement. This chain is Capsid protein, found in Squash leaf curl virus (SLCV).